The following is a 314-amino-acid chain: DNA topoisomerase 1B (314 aa).

The 238-residue stretch at 77–314 folds into the Topo IB-type catalytic domain; it reads VQNRNAKRDR…VDHVKSSTDG (238 aa). The active-site O-(3'-phospho-DNA)-tyrosine intermediate is Y274.

Belongs to the type IB topoisomerase family.

The enzyme catalyses ATP-independent breakage of single-stranded DNA, followed by passage and rejoining.. Functionally, releases the supercoiling and torsional tension of DNA introduced during the DNA replication and transcription by transiently cleaving and rejoining one strand of the DNA duplex. Introduces a single-strand break via transesterification at the specific target site 5'-[CT]CCTTp site in duplex DNA. The scissile phosphodiester is attacked by the catalytic tyrosine of the enzyme, resulting in the formation of a DNA-(3'-phosphotyrosyl)-enzyme intermediate and the expulsion of a 5'-OH DNA strand. The free DNA strand then undergoes passage around the unbroken strand thus removing DNA supercoils. Finally, in the religation step, the DNA 5'-OH attacks the covalent intermediate to expel the active-site tyrosine and restore the DNA phosphodiester backbone. This Vaccinia virus (strain Ankara) (VACV) protein is DNA topoisomerase 1B (TOP1).